The primary structure comprises 410 residues: Transcription factor Dp-1 (410 aa).

Residue Lys3 is modified to N6-acetyllysine. The residue at position 23 (Ser23) is a Phosphoserine; by CDK2. Residues 77–114 are disordered; that stretch reads VVGSPHTPNTHFVSQNQPSDPSPWSAGKRNRKGEKNGK. Over residues 82-95 the composition is skewed to polar residues; the sequence is HTPNTHFVSQNQPS. The segment covering 104-114 has biased composition (basic residues); that stretch reads KRNRKGEKNGK. Residues 105–127 form an interaction with CEBPA region; the sequence is RNRKGEKNGKGLRHFSMKVCEKV. A DNA-binding region spans residues 113–195; it reads GKGLRHFSMK…KKEIKWIGLP (83 aa). Residues 161–195 carry the DEF box motif; the sequence is DQKNIRRRVYDALNVLMAMNIISKEKKEIKWIGLP. Residues 204–277 form a dimerization region; the sequence is SLEVERQRRL…KKTVIDCSIS (74 aa). An enhances binding of RB protein to E2F region spans residues 211 to 327; sequence RRLERIKQKQ…DLRVARSLVP (117 aa). A DCB1 region spans residues 214 to 246; it reads ERIKQKQSQLQELILQQIAFKNLVQRNRQVEQQ. Residues 259–315 form a DCB2 region; that stretch reads LPFIIVNTSKKTVIDCSISNDKFEYLFNFDNTFEIHDDIEVLKRMGMACGLESGSCS. Residues 370-410 are disordered; the sequence is GALATSSSGSQYSGSRVETPVSCVGEDDEDDEDFNENEEED. A compositionally biased stretch (low complexity) spans 375–384; it reads SSSGSQYSGS. A compositionally biased stretch (acidic residues) spans 394-410; the sequence is GEDDEDDEDFNENEEED.

It belongs to the E2F/DP family. Component of the E2F:DP transcription factor complex. Forms heterodimers with E2F family members. The complex can interact with hypophosphorylated retinoblastoma protein RB1 and related proteins (RBL1 and RBL2) that inhibit the E2F transactivation domain. This repression involves recruitment of histone deacetylase (HDAC). During the cell cycle, from mid-to-late G1 phase, RB family members become phosphorylated, detach from the DRTF1/E2F complex to render E2F transcriptionally active. Part of the E2F6.com-1 complex in G0 phase is composed of E2F6, MGA, MAX, TFDP1, CBX3, BAT8, EUHMTASE1, RING1, RNF2, MBLR, L3MBTL2 YAF2. Component of the DREAM complex (also named LINC complex) at least composed of E2F4, E2F5, LIN9, LIN37, LIN52, LIN54, MYBL1, MYBL2, RBL1, RBL2, RBBP4, TFDP1 and TFDP2. The complex exists in quiescent cells where it represses cell cycle-dependent genes. It dissociates in S phase when LIN9, LIN37, LIN52 and LIN54 form a subcomplex that binds to MYBL2. The complex TFDP1:E2F1 interacts with CEBPA; the interaction prevents CEBPA binding to target gene promoters and represses its transcriptional activity. In terms of processing, ubiquitinated by the BCR(KBTBD5) complex, leading to its subsequent degradation. Phosphorylation by E2F1-bound cyclin A-CDK2, in the S phase, inhibits E2F-mediated DNA binding and transactivation.

Its subcellular location is the nucleus. The protein localises to the cytoplasm. In terms of biological role, can stimulate E2F-dependent transcription. Binds DNA cooperatively with E2F family members through the E2 recognition site, 5'-TTTC[CG]CGC-3', found in the promoter region of a number of genes whose products are involved in cell cycle regulation or in DNA replication. The E2F1:DP complex appears to mediate both cell proliferation and apoptosis. Blocks adipocyte differentiation by repressing CEBPA binding to its target gene promoters. This Bos taurus (Bovine) protein is Transcription factor Dp-1 (TFDP1).